We begin with the raw amino-acid sequence, 499 residues long: Lysine--tRNA ligase (499 aa).

Residues glutamate 408 and glutamate 415 each contribute to the Mg(2+) site.

This sequence belongs to the class-II aminoacyl-tRNA synthetase family. Homodimer. It depends on Mg(2+) as a cofactor.

It localises to the cytoplasm. The catalysed reaction is tRNA(Lys) + L-lysine + ATP = L-lysyl-tRNA(Lys) + AMP + diphosphate. This is Lysine--tRNA ligase from Bacillus cereus (strain G9842).